Reading from the N-terminus, the 104-residue chain is Enhancer of rudimentary homolog 1 (104 aa).

This sequence belongs to the E(R) family. Homodimer. Component of the erh1-mmi1 complex. Interacts with mmi1 (via N-terminus) in a 2:2 stoichiometry.

Its subcellular location is the nucleus. It is found in the cytoplasm. In terms of biological role, forms part of the erh1-mmi1 complex that recruits the CCR4-NOT complex and the NURS complex to target RNAs. Suppresses the meiotic program during vegetative growth and promotes the meiotic program during mating. Recruitment of the NURS complex to target mRNAs promotes mRNA decay by engagement of the nuclear exosome, and formation of heterochromatin islands at meiotic genes silenced by the exosome. Recruitment of the CCR4-NOT complex to target RNAs promotes heterochromatin formation at RNAi-dependent heterochromatin domains (HOODs), including a subset of meiotic genes, lncRNAs and retrotransposons. Recruitment of the CCR4-NOT complex to rDNA promotes rDNA heterochromatin assembly. The protein is Enhancer of rudimentary homolog 1 of Schizosaccharomyces pombe (strain 972 / ATCC 24843) (Fission yeast).